Consider the following 167-residue polypeptide: Leptin (167 aa).

A signal peptide spans 1–21 (MCWRPLCRFLWLWSYLSYVQA). Cysteines 117 and 167 form a disulfide.

This sequence belongs to the leptin family.

It is found in the secreted. Functionally, key player in the regulation of energy balance and body weight control. Once released into the circulation, has central and peripheral effects by binding LEPR, found in many tissues, which results in the activation of several major signaling pathways. In the hypothalamus, acts as an appetite-regulating factor that induces a decrease in food intake and an increase in energy consumption by inducing anorexinogenic factors and suppressing orexigenic neuropeptides, also regulates bone mass and secretion of hypothalamo-pituitary-adrenal hormones. In the periphery, increases basal metabolism, influences reproductive function, regulates pancreatic beta-cell function and insulin secretion, is pro-angiogenic for endothelial cell and affects innate and adaptive immunity. In the arcuate nucleus of the hypothalamus, activates by depolarization POMC neurons inducing FOS and SOCS3 expression to release anorexigenic peptides and inhibits by hyperpolarization NPY neurons inducing SOCS3 with a consequent reduction on release of orexigenic peptides. In addition to its known satiety inducing effect, has a modulatory role in nutrient absorption. In the intestine, reduces glucose absorption by enterocytes by activating PKC and leading to a sequential activation of p38, PI3K and ERK signaling pathways which exerts an inhibitory effect on glucose absorption. Acts as a growth factor on certain tissues, through the activation of different signaling pathways increases expression of genes involved in cell cycle regulation such as CCND1, via JAK2-STAT3 pathway, or VEGFA, via MAPK1/3 and PI3K-AKT1 pathways. May also play an apoptotic role via JAK2-STAT3 pathway and up-regulation of BIRC5 expression. Pro-angiogenic, has mitogenic activity on vascular endothelial cells and plays a role in matrix remodeling by regulating the expression of matrix metalloproteinases (MMPs) and tissue inhibitors of metalloproteinases (TIMPs). In innate immunity, modulates the activity and function of neutrophils by increasing chemotaxis and the secretion of oxygen radicals. Increases phagocytosis by macrophages and enhances secretion of pro-inflammatory mediators. Increases cytotoxic ability of NK cells. Plays a pro-inflammatory role, in synergy with IL1B, by inducing NOS2 which promotes the production of IL6, IL8 and Prostaglandin E2, through a signaling pathway that involves JAK2, PI3K, MAP2K1/MEK1 and MAPK14/p38. In adaptive immunity, promotes the switch of memory T-cells towards T helper-1 cell immune responses. Increases CD4(+)CD25(-) T-cell proliferation and reduces autophagy during TCR (T-cell receptor) stimulation, through MTOR signaling pathway activation and BCL2 up-regulation. In Rattus norvegicus (Rat), this protein is Leptin (Lep).